A 327-amino-acid polypeptide reads, in one-letter code: 2-keto-3-deoxygluconate permease (327 aa).

10 helical membrane passes run 10 to 30 (IPGG…TFSP), 42 to 62 (GMIT…GASI), 73 to 93 (KSGT…AIAS), 95 to 115 (IIPE…LALV), 139 to 159 (AGAF…IILG), 163 to 183 (IASF…VGFA), 199 to 219 (VQTL…LTVI), 224 to 244 (LLGI…LIIA), 254 to 274 (TAGI…VLIA), and 289 to 309 (SLVA…TSIW).

This sequence belongs to the KdgT transporter family.

The protein localises to the cell inner membrane. The catalysed reaction is 2-dehydro-3-deoxy-D-gluconate(in) + H(+)(in) = 2-dehydro-3-deoxy-D-gluconate(out) + H(+)(out). Catalyzes the proton-dependent uptake of 2-keto-3-deoxygluconate (KDG) into the cell. This Escherichia coli O7:K1 (strain IAI39 / ExPEC) protein is 2-keto-3-deoxygluconate permease.